A 381-amino-acid polypeptide reads, in one-letter code: Opsin Rh2 (381 aa).

Topologically, residues 1 to 56 (MERSHLPETPFDLAHSGPRFQAQSSGNGSVLDNVLPDMAHLVNPYWSRFAPMDPMM) are extracellular. A glycan (N-linked (GlcNAc...) asparagine) is linked at asparagine 27. Residues 57–81 (SKILGLFTLAIMIISCCGNGVVVYI) form a helical membrane-spanning segment. The Cytoplasmic segment spans residues 82–93 (FGGTKSLRTPAN). Residues 94 to 119 (LLVLNLAFSDFCMMASQSPVMIINFY) traverse the membrane as a helical segment. At 120 to 133 (YETWVLGPLWCDIY) the chain is on the extracellular side. Cysteine 130 and cysteine 207 are oxidised to a cystine. A helical transmembrane segment spans residues 134 to 153 (AGCGSLFGCVSIWSMCMIAF). The Cytoplasmic segment spans residues 154-172 (DRYNVIVKGINGTPMTIKT). Residues 173 to 196 (SIMKILFIWMMAVFWTVMPLIGWS) traverse the membrane as a helical segment. Residues 197-220 (AYVPEGNLTACSIDYMTRMWNPRS) lie on the Extracellular side of the membrane. The helical transmembrane segment at 221 to 248 (YLITYSLFVYYTPLFLICYSYWFIIAAV) threads the bilayer. Residues 249–283 (AAHEKAMREQAKKMNVKSLRSSEDCDKSAEGKLAK) are Cytoplasmic-facing. The chain crosses the membrane as a helical span at residues 284-307 (VALTTISLWFMAWTPYLVICYFGL). Over 308–314 (FKIDGLT) the chain is Extracellular. Residues 315–339 (PLTTIWGATFAKTSAVYNPIVYGIS) form a helical membrane-spanning segment. N6-(retinylidene)lysine is present on lysine 326. Topologically, residues 340-381 (HPKYRIVLKEKCPMCVFGNTDEPKPDAPASDTETTSEADSKA) are cytoplasmic. The interval 359-381 (TDEPKPDAPASDTETTSEADSKA) is disordered. Polar residues predominate over residues 370 to 381 (DTETTSEADSKA).

This sequence belongs to the G-protein coupled receptor 1 family. Opsin subfamily. Phosphorylated on some or all of the serine and threonine residues present in the C-terminal region. In terms of tissue distribution, predominant opsin expressed in the dorsal ocelli.

The protein resides in the membrane. Its function is as follows. Visual pigments are the light-absorbing molecules that mediate vision. They consist of an apoprotein, opsin, covalently linked to cis-retinal. The protein is Opsin Rh2 (Rh2) of Drosophila melanogaster (Fruit fly).